Here is a 379-residue protein sequence, read N- to C-terminus: Cytochrome b (379 aa).

The next 4 membrane-spanning stretches (helical) occupy residues 33 to 53 (FGSL…FLAM), 77 to 98 (WLIR…FIHV), 113 to 133 (WNIG…GYVL), and 178 to 198 (FFAF…VHLL). Residues H83 and H97 each coordinate heme b. 2 residues coordinate heme b: H182 and H196. Residue H201 coordinates a ubiquinone. 4 helical membrane-spanning segments follow: residues 226 to 246 (IKDL…ALFF), 288 to 308 (LGGV…PLLN), 320 to 340 (ITQT…WIGG), and 347 to 367 (FTTI…ILMP).

Belongs to the cytochrome b family. The cytochrome bc1 complex contains 11 subunits: 3 respiratory subunits (MT-CYB, CYC1 and UQCRFS1), 2 core proteins (UQCRC1 and UQCRC2) and 6 low-molecular weight proteins (UQCRH/QCR6, UQCRB/QCR7, UQCRQ/QCR8, UQCR10/QCR9, UQCR11/QCR10 and a cleavage product of UQCRFS1). This cytochrome bc1 complex then forms a dimer. Requires heme b as cofactor.

It is found in the mitochondrion inner membrane. Its function is as follows. Component of the ubiquinol-cytochrome c reductase complex (complex III or cytochrome b-c1 complex) that is part of the mitochondrial respiratory chain. The b-c1 complex mediates electron transfer from ubiquinol to cytochrome c. Contributes to the generation of a proton gradient across the mitochondrial membrane that is then used for ATP synthesis. The sequence is that of Cytochrome b (MT-CYB) from Akodon affinis (Colombian grass mouse).